A 627-amino-acid polypeptide reads, in one-letter code: Probable inactive receptor kinase At3g02880 (627 aa).

The N-terminal stretch at 1-23 (MKYKRKLSLSVVFLFVFYLAAVT) is a signal peptide. LRR repeat units follow at residues 91–112 (QLKTLSLRFNSLSGPIPSDFSN), 115–137 (LLRYLYLQGNAFSGEIPSLLFTL), 139–161 (SIIRINLGENKFSGRIPDNVNSA), 163–184 (RLVTLYLERNQLSGPIPEITLP), and 185–206 (LQQFNVSSNQLNGSIPSSLSSW). Residues 222–246 (DTCEAESPNGGDAGGPNTPPEKKDS) form a disordered region. Residues 253-273 (AIVGIVIGCVVGLLLLLLILF) traverse the membrane as a helical segment. A Protein kinase domain is found at 345-620 (KASAEVLGKG…LIEEVSHSSG (276 aa)). Serine 347 is subject to Phosphoserine. ATP contacts are provided by residues 351 to 359 (LGKGTVGSS) and lysine 373. Residues 389-409 (LHVLGSMSHANLVTLIAYYFS) form a helical membrane-spanning segment. Serine 424 is modified (phosphoserine). Threonine 444 carries the phosphothreonine modification. Serine 519 bears the Phosphoserine mark. A Phosphothreonine modification is found at threonine 595. Residues serine 621 and serine 626 each carry the phosphoserine modification.

The protein belongs to the protein kinase superfamily. Ser/Thr protein kinase family.

Its subcellular location is the membrane. This is Probable inactive receptor kinase At3g02880 from Arabidopsis thaliana (Mouse-ear cress).